The chain runs to 60 residues: MFVWGLFCILRIALKPDRKYAVRLISKTAISSSGRADDNQDCCMVRGSRPRWRSNFSKLF.

Functionally, controls the expression of small non-coding RNA GcvB, which represses the expression of many amino acid transporter proteins and uptake of aminoglycoside antibiotics in cells. Might be a transcriptional activator. An RNA (xtr) with a tRNA-like fold possibly derived from tRNA-Arg(UCG) is encoded entirely within the protein; xtr does not have the sequence corresponding to tRNA anticodon or variable arms. 10 synonymous codon changes in the xtr region of xtpA have the same phenotype as a deletion mutation, suggesting the mRNA secondary structure is important for function. The chain is Putative transcriptional regulator XtpA from Escherichia coli (strain K12).